The sequence spans 372 residues: Stress-activated protein kinase JNK (372 aa).

The Protein kinase domain maps to 24 to 320; sequence YINLRPIGSG…VDEALKHEYI (297 aa). ATP-binding positions include 31–36 and Lys-53; that span reads GSGAQG. The Proton acceptor role is filled by Asp-149. Thr-181 is modified (phosphothreonine). A TXY motif is present at residues 181–183; it reads TPY. At Tyr-183 the chain carries Phosphotyrosine.

The protein belongs to the protein kinase superfamily. CMGC Ser/Thr protein kinase family. MAP kinase subfamily. Interacts with MKP-4 (via tyrosine-protein phosphatase domain); the interaction dephosphorylates bsk. Requires Mg(2+) as cofactor. Dually phosphorylated on Thr-181 and Tyr-183, which activates the enzyme. During gastrulation, expression is seen in cells undergoing morphogenetic movements. By stage 9 of embryonic development, expression is ubiquitous. At stages 12-14, expression occurs in epidermis and central nervous system. At stage 15, expression is restricted to ventral nerve cord, brain and some peripheral neurons. In larvae, expression is seen in all imaginal disks, with highest levels in wing and eye disks, and in the CNS. Adults express the protein in fat body and hemocytes.

Its subcellular location is the nucleus. It is found in the cytoplasm. It catalyses the reaction L-seryl-[protein] + ATP = O-phospho-L-seryl-[protein] + ADP + H(+). It carries out the reaction L-threonyl-[protein] + ATP = O-phospho-L-threonyl-[protein] + ADP + H(+). With respect to regulation, activated by threonine and tyrosine phosphorylation by the dual specificity kinase, hep. Inhibited by dual specificity phosphatase, puckered. Its function is as follows. Mitogen-activated protein kinase and key component of the c-Jun N-terminal kinase (JNK) pathway which phosphorylate and activate transcription factors involved in a wide range of biological processes including response to various stresses, cellular proliferation, differentiation and migration, and regulation of cell shape. Responds to activation by environmental stress by phosphorylating a number of transcription factors, primarily components of AP-1 such as Jra and also the transcriptional repressor aop, and thus regulates transcriptional activity. Component of the immune response activated by bacterial infection, and is involved in wound healing and in dorsal closure, a morphogenetic movement during embryogenesis. Functions in the systematic response to wounding acting downstream of the Hayan-phenoloxidase PPO1 cascade. During epidermal wound healing involved in cellular polarization by inducing the translocation of sktl and mys/integrin beta to the trailing edge. Exhibits cytoprotective activity in neuronal cells in response to wounding to the integument. Controls the expression of a phosphatase, puckered, at the edges of wounded epidermal tissue and in the dorsal epithelium during dorsal closure. Regulates the activity of SREBP in neurons and thereby the accumulation of lipids in glia. Plays a role in positively regulating the expression of DIP2 independently of AP-1, thereby ensuring proper axon guidance in mushroom bodies. In enterocytes and differentiating progenitors of the gut that are experiencing inorganic phosphate (Pi) deficiency, activated by Cka to induce nearby progenitor cells to proliferate and form new absorptive cells, probably helping the organism to cope with the nutrient deficiency by maximizing absorption of dietary Pi. The chain is Stress-activated protein kinase JNK from Drosophila melanogaster (Fruit fly).